The chain runs to 216 residues: Sperm microtubule inner protein 8 (216 aa).

As to quaternary structure, microtubule inner protein component of sperm flagellar doublet microtubules.

It localises to the cytoplasm. The protein resides in the cytoskeleton. It is found in the flagellum axoneme. In terms of biological role, microtubule inner protein (MIP) part of the dynein-decorated doublet microtubules (DMTs) in flagellum axoneme. May serve to reinforce and thus stabilize the microtubule structure in the sperm flagella. In Rattus norvegicus (Rat), this protein is Sperm microtubule inner protein 8 (Spmip8).